A 368-amino-acid chain; its full sequence is Branched-chain-amino-acid aminotransferase (368 aa).

Arg101 is a pyridoxal 5'-phosphate binding site. Lys204 bears the N6-(pyridoxal phosphate)lysine mark. Residues Tyr209, 271–272, and Thr314 contribute to the pyridoxal 5'-phosphate site; that span reads IT.

It belongs to the class-IV pyridoxal-phosphate-dependent aminotransferase family. Homodimer. Pyridoxal 5'-phosphate is required as a cofactor.

The enzyme catalyses L-leucine + 2-oxoglutarate = 4-methyl-2-oxopentanoate + L-glutamate. It carries out the reaction L-isoleucine + 2-oxoglutarate = (S)-3-methyl-2-oxopentanoate + L-glutamate. It catalyses the reaction L-valine + 2-oxoglutarate = 3-methyl-2-oxobutanoate + L-glutamate. The protein operates within amino-acid biosynthesis; L-isoleucine biosynthesis; L-isoleucine from 2-oxobutanoate: step 4/4. It functions in the pathway amino-acid biosynthesis; L-leucine biosynthesis; L-leucine from 3-methyl-2-oxobutanoate: step 4/4. Its pathway is amino-acid biosynthesis; L-valine biosynthesis; L-valine from pyruvate: step 4/4. Functionally, catalyzes the reversible transfers of an amino group from glutamate to the alpha-ketoacid of the respective amino acid in the final step in the biosynthesis of branchedchain amino acids. This is Branched-chain-amino-acid aminotransferase (ilvE) from Mycobacterium tuberculosis (strain CDC 1551 / Oshkosh).